A 355-amino-acid chain; its full sequence is Tyrosine recombinase XerC (355 aa).

The 86-residue stretch at 4-89 folds into the Core-binding (CB) domain; that stretch reads TQFDGDIDSF…AVRGFFAWAY (86 aa). Positions 137-181 are disordered; it reads KDDGGAAAAPGSGKAAGKTADKSADTVNRSEAPARADKRDNARVT. A compositionally biased stretch (low complexity) spans 141 to 154; the sequence is GAAAAPGSGKAAGK. Positions 158 to 349 constitute a Tyr recombinase domain; it reads KSADTVNRSE…SIEQLKNRYG (192 aa). Basic and acidic residues predominate over residues 168–178; that stretch reads APARADKRDNA. Active-site residues include arginine 200, lysine 224, histidine 301, arginine 304, and histidine 327. Tyrosine 336 serves as the catalytic O-(3'-phospho-DNA)-tyrosine intermediate.

The protein belongs to the 'phage' integrase family. XerC subfamily. As to quaternary structure, forms a cyclic heterotetrameric complex composed of two molecules of XerC and two molecules of XerD.

It is found in the cytoplasm. Its function is as follows. Site-specific tyrosine recombinase, which acts by catalyzing the cutting and rejoining of the recombining DNA molecules. The XerC-XerD complex is essential to convert dimers of the bacterial chromosome into monomers to permit their segregation at cell division. It also contributes to the segregational stability of plasmids. In Bifidobacterium longum (strain DJO10A), this protein is Tyrosine recombinase XerC.